A 652-amino-acid polypeptide reads, in one-letter code: Inactive leucine-rich repeat receptor-like serine/threonine-protein kinase At1g60630 (652 aa).

Residues 1 to 23 form the signal peptide; sequence MISSSSCMFFLVFAFFLISPVRS. The Extracellular portion of the chain corresponds to 24–256; that stretch reads SDVEALLSLK…SRTKLIGIIS (233 aa). 6 LRR repeats span residues 64 to 84, 85 to 108, 109 to 132, 134 to 156, 158 to 178, and 179 to 203; these read SKLVLENLNLSGSLNGKSLNQ, LDQLRVLSFKGNSLSGSIPNLSGL, VNLKSLYLNDNNFSGEFPESLTSL, RLKTVVLSRNRFSGKIPSSLLRL, RLYTFYVQDNLFSGSIPPLNQ, and ATLRFFNVSNNQLSGHIPPTQALNR. 3 N-linked (GlcNAc...) asparagine glycosylation sites follow: Asn-72, Asn-104, and Asn-120. 3 N-linked (GlcNAc...) asparagine glycosylation sites follow: Asn-185, Asn-205, and Asn-225. The chain crosses the membrane as a helical span at residues 257–277; it reads GSICGGILILLLTFLLICLLW. Residues 278–652 lie on the Cytoplasmic side of the membrane; the sequence is RRKRSKSKRE…SLPREDHMSI (375 aa). Residues 286 to 321 are disordered; the sequence is REERRSKRVAESKEAKTAETEEGTSDQKNKRFSWEK. The region spanning 350–624 is the Protein kinase domain; that stretch reads KASAETLGRG…VKDARAEAAL (275 aa). Ser-352 is subject to Phosphoserine. ATP-binding positions include 356 to 364 and Lys-378; that span reads LGRGTLGST. Phosphoserine occurs at positions 430 and 433. A Phosphothreonine modification is found at Thr-509. A disordered region spans residues 630–652; the sequence is SDHSPGRWSDTIQSLPREDHMSI.

It belongs to the protein kinase superfamily. Ser/Thr protein kinase family.

The protein localises to the cell membrane. The protein is Inactive leucine-rich repeat receptor-like serine/threonine-protein kinase At1g60630 of Arabidopsis thaliana (Mouse-ear cress).